A 255-amino-acid polypeptide reads, in one-letter code: Indole-3-glycerol phosphate synthase (255 aa).

Belongs to the TrpC family.

It carries out the reaction 1-(2-carboxyphenylamino)-1-deoxy-D-ribulose 5-phosphate + H(+) = (1S,2R)-1-C-(indol-3-yl)glycerol 3-phosphate + CO2 + H2O. It functions in the pathway amino-acid biosynthesis; L-tryptophan biosynthesis; L-tryptophan from chorismate: step 4/5. The sequence is that of Indole-3-glycerol phosphate synthase from Streptococcus pneumoniae (strain 70585).